A 157-amino-acid polypeptide reads, in one-letter code: MKKIILAGGCFWGVEEFLSRINGVVSTEVGYANGRTENPTYEDICTKNTYFAEVCLVNYDENIISLKELLAKFWTIIDPTSLNKQGNDVGSQYRTGIYYVDPSDLEEILNSKEELQKSYSKKIVTEVKPLENYYKAEEYHQKYLKKNPNGYCHIKLD.

The active site involves Cys10.

Belongs to the MsrA Met sulfoxide reductase family.

It carries out the reaction L-methionyl-[protein] + [thioredoxin]-disulfide + H2O = L-methionyl-(S)-S-oxide-[protein] + [thioredoxin]-dithiol. The catalysed reaction is [thioredoxin]-disulfide + L-methionine + H2O = L-methionine (S)-S-oxide + [thioredoxin]-dithiol. In terms of biological role, has an important function as a repair enzyme for proteins that have been inactivated by oxidation. Catalyzes the reversible oxidation-reduction of methionine sulfoxide in proteins to methionine. This Clostridium perfringens (strain ATCC 13124 / DSM 756 / JCM 1290 / NCIMB 6125 / NCTC 8237 / Type A) protein is Peptide methionine sulfoxide reductase MsrA.